A 246-amino-acid polypeptide reads, in one-letter code: tRNA (guanine-N(7)-)-methyltransferase (246 aa).

S-adenosyl-L-methionine contacts are provided by Glu-76, Glu-101, Asp-128, and Asp-151. The active site involves Asp-151. Residue Lys-155 coordinates substrate. Residues 157 to 162 (RHNKRR) form an interaction with RNA region. Substrate is bound by residues Asp-187 and 222–225 (TKFE).

It belongs to the class I-like SAM-binding methyltransferase superfamily. TrmB family.

It catalyses the reaction guanosine(46) in tRNA + S-adenosyl-L-methionine = N(7)-methylguanosine(46) in tRNA + S-adenosyl-L-homocysteine. Its pathway is tRNA modification; N(7)-methylguanine-tRNA biosynthesis. Catalyzes the formation of N(7)-methylguanine at position 46 (m7G46) in tRNA. This Dechloromonas aromatica (strain RCB) protein is tRNA (guanine-N(7)-)-methyltransferase.